Here is a 257-residue protein sequence, read N- to C-terminus: Dof zinc finger protein DOF5.3 (257 aa).

Residues 23–50 (LSYSSNPTPLDNDQKKPSPATAVTRPQP) are disordered. The span at 24 to 33 (SYSSNPTPLD) shows a compositional bias: polar residues. Residues 55-109 (LRCPRCDSTNTKFCYYNNYSLTQPRYFCKSCRRYWTKGGTLRNIPVGGGCRKNKR) form a Dof-type zinc finger. Positions 57, 60, 82, and 85 each coordinate Zn(2+). The disordered stretch occupies residues 104–127 (CRKNKRSTSSAARSLRTTPEPASH). Residues 110 to 121 (STSSAARSLRTT) show a composition bias toward low complexity.

As to expression, the PEAR proteins (e.g. DOF2.4, DOF5.1, DOF3.2, DOF1.1, DOF5.6 and DOF5.3) form a short-range concentration gradient that peaks at protophloem sieve elements (PSE). Accumulates in the stele.

It is found in the nucleus. Functionally, transcription factor that binds specifically to a 5'-AA[AG]G-3' consensus core sequence. The PEAR proteins (e.g. DOF2.4, DOF5.1, DOF3.2, DOF1.1, DOF5.6 and DOF5.3) activate gene expression that promotes radial growth of protophloem sieve elements. This chain is Dof zinc finger protein DOF5.3, found in Arabidopsis thaliana (Mouse-ear cress).